The sequence spans 628 residues: MGYEAGQYDVIVIGAGHAGVEAALASARQGAKTLVLTINLDMVAFMPCNPSVGGPAKGIVVREIDALGGEMGRNIDKTHIQMRMLNTGKGPAVRALRAQADKFQYQHEMKNTLEKEPNLTLLQGIVERLIVEDGECRGVITQTGAHYRAKAVVMTTGTYLRGRIILGDLSYSSGPNNQQPSIKLSEHLEELGFDLVRFKTGTPPRVKSDTIDYSKTEIQPGDDVPRAFSYETVEYITDQLPCWLTYTSPETHEIIDSNLHRSPMYSGMIKGTGPRYCPSIEDKVVRFNDKPRHQIFLEPEGRNTQEVYVQGLSTSLPEDVQQRMLATIPGLENVQMMRAGYAIEYDAIVPTQLWPTLETKKITNLYTAGQINGTSGYEEAAGQGIMAGINAGRKALGKEEVILSRSDAYIGVLIDDLVTKGTNEPYRLLTSRAEYRLLLRHDNADLRLTEIGHRIGLISDERYAAFEKKKAAIEAEKKRLHSVIIKPSPENQEYIRSLGGSELKDGVRGTDLMKRPEMNYETVTKLAPPEVPVPQDVAEQVEIQVKYEGYIEKSLQQVEKLKKMENKKIPDRIDYDAIKGIATEARQKLKNVRPLSVAQASRISGVNPADISILLVYLEQGRIAKIAE.

FAD is bound by residues 14 to 19 (GAGHAG), V126, and S181. NAD(+) is bound at residue 273 to 287 (GPRYCPSIEDKVVRF). FAD is bound at residue Q370.

This sequence belongs to the MnmG family. As to quaternary structure, homodimer. Heterotetramer of two MnmE and two MnmG subunits. Requires FAD as cofactor.

The protein localises to the cytoplasm. Functionally, NAD-binding protein involved in the addition of a carboxymethylaminomethyl (cmnm) group at the wobble position (U34) of certain tRNAs, forming tRNA-cmnm(5)s(2)U34. In Bacillus subtilis (strain 168), this protein is tRNA uridine 5-carboxymethylaminomethyl modification enzyme MnmG.